Reading from the N-terminus, the 299-residue chain is ATP phosphoribosyltransferase (299 aa).

It belongs to the ATP phosphoribosyltransferase family. Long subfamily. As to quaternary structure, equilibrium between an active dimeric form, an inactive hexameric form and higher aggregates. Interconversion between the various forms is largely reversible and is influenced by the natural substrates and inhibitors of the enzyme. Requires Mg(2+) as cofactor.

It localises to the cytoplasm. The catalysed reaction is 1-(5-phospho-beta-D-ribosyl)-ATP + diphosphate = 5-phospho-alpha-D-ribose 1-diphosphate + ATP. Its pathway is amino-acid biosynthesis; L-histidine biosynthesis; L-histidine from 5-phospho-alpha-D-ribose 1-diphosphate: step 1/9. With respect to regulation, feedback inhibited by histidine. Its function is as follows. Catalyzes the condensation of ATP and 5-phosphoribose 1-diphosphate to form N'-(5'-phosphoribosyl)-ATP (PR-ATP). Has a crucial role in the pathway because the rate of histidine biosynthesis seems to be controlled primarily by regulation of HisG enzymatic activity. The sequence is that of ATP phosphoribosyltransferase from Sodalis glossinidius (strain morsitans).